Consider the following 147-residue polypeptide: Two-component response regulator ORR11 (147 aa).

Residues 29–146 (HVLAVDDSSV…DVSRLFSRVL (118 aa)) form the Response regulatory domain. Aspartate 79 carries the 4-aspartylphosphate modification.

It belongs to the ARR family. Type-A subfamily. Post-translationally, two-component system major event consists of a His-to-Asp phosphorelay between a sensor histidine kinase (HK) and a response regulator (RR). In plants, the His-to-Asp phosphorelay involves an additional intermediate named Histidine-containing phosphotransfer protein (HPt). This multistep phosphorelay consists of a His-Asp-His-Asp sequential transfer of a phosphate group between first a His and an Asp of the HK protein, followed by the transfer to a conserved His of the HPt protein and finally the transfer to an Asp in the receiver domain of the RR protein.

In terms of biological role, functions as a response regulator involved in His-to-Asp phosphorelay signal transduction system. Phosphorylation of the Asp residue in the receiver domain activates the ability of the protein to promote the transcription of target genes. Type-A response regulators seem to act as negative regulators of the cytokinin signaling. The chain is Two-component response regulator ORR11 from Oryza sativa subsp. indica (Rice).